The chain runs to 95 residues: uncharacterized protein (95 aa).

Positions 1–24 (MKKLATLTALAGALTMAVATAAQA) form a signal peptide, or 21. Over residues 55–89 (EGKCGADKAKSAEGKCGEGKCGADKAKSAEGKCGE) the composition is skewed to basic and acidic residues. The disordered stretch occupies residues 55–95 (EGKCGADKAKSAEGKCGEGKCGADKAKSAEGKCGEGKCGSK).

This is an uncharacterized protein from Haemophilus influenzae (strain ATCC 51907 / DSM 11121 / KW20 / Rd).